Reading from the N-terminus, the 233-residue chain is 2,3,4,5-tetrahydropyridine-2,6-dicarboxylate N-acetyltransferase (233 aa).

Belongs to the transferase hexapeptide repeat family. DapH subfamily.

It catalyses the reaction (S)-2,3,4,5-tetrahydrodipicolinate + acetyl-CoA + H2O = L-2-acetamido-6-oxoheptanedioate + CoA. The protein operates within amino-acid biosynthesis; L-lysine biosynthesis via DAP pathway; LL-2,6-diaminopimelate from (S)-tetrahydrodipicolinate (acetylase route): step 1/3. Functionally, catalyzes the transfer of an acetyl group from acetyl-CoA to tetrahydrodipicolinate. The protein is 2,3,4,5-tetrahydropyridine-2,6-dicarboxylate N-acetyltransferase of Leuconostoc mesenteroides subsp. mesenteroides (strain ATCC 8293 / DSM 20343 / BCRC 11652 / CCM 1803 / JCM 6124 / NCDO 523 / NBRC 100496 / NCIMB 8023 / NCTC 12954 / NRRL B-1118 / 37Y).